We begin with the raw amino-acid sequence, 121 residues long: Basic phospholipase A2 homolog 2 (121 aa).

7 cysteine pairs are disulfide-bonded: Cys26/Cys115, Cys28/Cys44, Cys43/Cys95, Cys49/Cys121, Cys50/Cys88, Cys57/Cys81, and Cys75/Cys86. The important for membrane-damaging activities in eukaryotes and bacteria; heparin-binding stretch occupies residues 105–117 (KKYRYHLKPLCKK).

Belongs to the phospholipase A2 family. Group II subfamily. K49 sub-subfamily. In terms of assembly, homodimer; non-covalently linked (probable alternative/compact dimer conformation in solution). Expressed by the venom gland.

It is found in the secreted. Functionally, snake venom phospholipase A2 homolog that lacks enzymatic activity. Is myotoxic and displays edema-inducing activities in mouse paw. Also displays cytotoxic activity against myotubes. A model of myotoxic mechanism has been proposed: an apo Lys49-PLA2 is activated by the entrance of a hydrophobic molecule (e.g. fatty acid) at the hydrophobic channel of the protein leading to a reorientation of a monomer. This reorientation causes a transition between 'inactive' to 'active' states, causing alignment of C-terminal and membrane-docking sites (MDoS) side-by-side and putting the membrane-disruption sites (MDiS) in the same plane, exposed to solvent and in a symmetric position for both monomers. The MDoS region stabilizes the toxin on membrane by the interaction of charged residues with phospholipid head groups. Subsequently, the MDiS region destabilizes the membrane with penetration of hydrophobic residues. This insertion causes a disorganization of the membrane, allowing an uncontrolled influx of ions (i.e. calcium and sodium), and eventually triggering irreversible intracellular alterations and cell death. In Bothrops brazili (Brazil's lancehead), this protein is Basic phospholipase A2 homolog 2.